A 420-amino-acid polypeptide reads, in one-letter code: Gamma-glutamyl phosphate reductase (420 aa).

This sequence belongs to the gamma-glutamyl phosphate reductase family.

It is found in the cytoplasm. The catalysed reaction is L-glutamate 5-semialdehyde + phosphate + NADP(+) = L-glutamyl 5-phosphate + NADPH + H(+). It functions in the pathway amino-acid biosynthesis; L-proline biosynthesis; L-glutamate 5-semialdehyde from L-glutamate: step 2/2. Its function is as follows. Catalyzes the NADPH-dependent reduction of L-glutamate 5-phosphate into L-glutamate 5-semialdehyde and phosphate. The product spontaneously undergoes cyclization to form 1-pyrroline-5-carboxylate. In Streptococcus pneumoniae serotype 4 (strain ATCC BAA-334 / TIGR4), this protein is Gamma-glutamyl phosphate reductase.